A 481-amino-acid polypeptide reads, in one-letter code: MSGPTWLPPKQPEPARAPQGRALPRGASGPPLAHGAALQPHPRVNFCPLPSEQCYQTPGEPEDRGLAWVGCHGAPQHSQGLPPDRGGLRPGSLDAEIDSLTSMLAELDGGRGHAPRRPDRQAYEPPEPPAYRSGSGPLRPNGGALPPPPLPGSPYGAPTPASYATASTPAGPAFPVQVKVARPVRGCGPPRRGASQASGPSPGPHFPLPGRGEVWGAGYRSHREPGPGVKEEAPGVSGPAGARGGGYGPQVPLSQPPEEELERLTKKLVHDMNHPPSGEYFGRCGGCGEDVVGDGAGVVALDRVFHVGCFVCSTCRAQLRGQHFYAVERRAYCESCYVATLEKCSTCSQPILDRILRAMGKAYHPGCFTCVVCHRGLDGIPFTVDATSQIHCIEDFHRKFAPRCSVCGGAIMPEPGQEETVRIVALDRSFHIGCYKCEECGLLLSSEGECQGCYPLDGHILCKTCSAWRIQELSATVTTDC.

Residues 1-12 (MSGPTWLPPKQP) are compositionally biased toward pro residues. Residues 1–259 (MSGPTWLPPK…QVPLSQPPEE (259 aa)) form a disordered region. Residue Arg25 is modified to Asymmetric dimethylarginine; alternate. Position 25 is an omega-N-methylarginine; alternate (Arg25). Position 55 is a phosphotyrosine; by SRC (Tyr55). At Ser92 the chain carries Phosphoserine. A compositionally biased stretch (basic and acidic residues) spans 108–122 (DGGRGHAPRRPDRQA). Arg111 bears the Omega-N-methylarginine mark. 2 stretches are compositionally biased toward low complexity: residues 153–173 (SPYG…AGPA) and 183–193 (PVRGCGPPRRG). Omega-N-methylarginine is present on residues Arg185 and Arg192. Phosphoserine is present on Ser195. Residue Arg211 is modified to Omega-N-methylarginine. The segment covering 221-233 (SHREPGPGVKEEA) has biased composition (basic and acidic residues). Arg243 bears the Omega-N-methylarginine mark. Ser254 carries the post-translational modification Phosphoserine. LIM zinc-binding domains are found at residues 284–321 (CGGC…QLRG), 344–403 (CSTC…FAPR), and 404–472 (CSVC…RIQE). Positions 474–481 (SATVTTDC) are interaction with MAGI1 and PTPN13.

Belongs to the zyxin/ajuba family. In terms of assembly, specifically interacts with the ligand binding domain of the thyroid receptor (TR) in the presence of thyroid hormone. Interacts (via the third LIM domain and C-terminus) with PTPN13 (via the second PDZ domain). Interacts (via the second LIM domain or via the third LIM domain plus C-terminus) with PDLIM4 (via PDZ domain). Found in a complex with PTPN13 and PDLIM4. Interacts with SVIL isoform 2. Interacts with LPAR2 but not other LPA receptors. Interacts with PRKAA2. Interacts with MAGI1. Interacts with SCRIB. Post-translationally, phosphorylation at Tyr-55 by SRC is required for enhancement of lysophosphatidic acid-induced cell migration. Tyr-55 is dephosphorylated by PTPN13.

Its subcellular location is the cytoplasm. It localises to the cytoskeleton. The protein resides in the cell junction. The protein localises to the focal adhesion. It is found in the nucleus. In terms of biological role, relays signals from the cell surface to the nucleus to weaken adherens junction and promote actin cytoskeleton reorganization and cell invasiveness. Involved in lysophosphatidic acid-induced cell adhesion and migration. Acts as a transcriptional coactivator for NF-kappa-B and JUN, and mediates the transrepression of these transcription factors induced by glucocorticoid receptor. This Bos taurus (Bovine) protein is Thyroid receptor-interacting protein 6 (TRIP6).